A 303-amino-acid chain; its full sequence is Diaminopimelate epimerase (303 aa).

Residues Asn15, Gln47, and Asn67 each contribute to the substrate site. Cys76 functions as the Proton donor in the catalytic mechanism. Substrate contacts are provided by residues 77–78 (GN), Asn163, Asn197, and 215–216 (ER). The Proton acceptor role is filled by Cys224. Substrate is bound at residue 225 to 226 (GS).

It belongs to the diaminopimelate epimerase family. Homodimer.

The protein resides in the cytoplasm. The catalysed reaction is (2S,6S)-2,6-diaminopimelate = meso-2,6-diaminopimelate. It participates in amino-acid biosynthesis; L-lysine biosynthesis via DAP pathway; DL-2,6-diaminopimelate from LL-2,6-diaminopimelate: step 1/1. Catalyzes the stereoinversion of LL-2,6-diaminopimelate (L,L-DAP) to meso-diaminopimelate (meso-DAP), a precursor of L-lysine and an essential component of the bacterial peptidoglycan. The chain is Diaminopimelate epimerase from Allorhizobium ampelinum (strain ATCC BAA-846 / DSM 112012 / S4) (Agrobacterium vitis (strain S4)).